We begin with the raw amino-acid sequence, 315 residues long: Protein sprouty homolog 2 (315 aa).

Residues 1–14 (MEARAQSGSGSQPL) are compositionally biased toward polar residues. Disordered stretches follow at residues 1 to 38 (MEARAQSGSGSQPLLQAPRDSGRQRGEPDPRDALPQQV) and 51 to 140 (NTNE…GSSF). The segment covering 20-32 (DSGRQRGEPDPRD) has biased composition (basic and acidic residues). Residues 88–100 (PRQPSRPQHPPAH) show a composition bias toward pro residues. Residues 109 to 140 (RSISTVSSGSRSSTRTSTSSSSSEQRLLGSSF) are compositionally biased toward low complexity. The segment at 118–315 (SRSSTRTSTS…VPPRNFEKPT (198 aa)) is required for interaction with CAV1. In terms of domain architecture, SPR spans 177 to 291 (KCEDCGKCKC…CYDRVNRPGC (115 aa)). The interval 178–315 (CEDCGKCKCK…VPPRNFEKPT (138 aa)) is required for interaction with TESK1.

It belongs to the sprouty family. As to quaternary structure, forms heterodimers with SPRY1. Forms a tripartite complex containing GAB1, METTL13 and SPRY2. Within the complex interacts with METTL13. Interacts with RAF1. Interacts (via C-terminus) with TESK1 (via C-terminus); the interaction disrupts SPRY2 interaction with GRB2, potentially via disruption of SPRY2 serine dephosphorylation. Interacts with PPP2R1A/PP2A-A and PPP2CA/PP2A-C; the interaction with PPP2CA/PP2A-C is inhibited by interaction with TESK1, possibly by vesicular sequestration of SPRY2. Inhibition of the interaction with the serine/threonine-protein phosphatase 2A (PP2A) holoenzyme results in loss of PP2A-mediated dephosphorylation, resulting in the loss of SPRY2 interaction with GRB2. Interacts with GRB2. Interacts with CBL/C-CBL; the interaction inhibits CBL-mediated ubiquitination of EGFR. Interacts (via C-terminus) with CAV1 (via C-terminus). In terms of processing, cleaved at Pro-144 by the prolyl endopeptidase FAP (seprase) activity (in vitro).

It is found in the cytoplasm. The protein resides in the cytoskeleton. It localises to the cell projection. Its subcellular location is the ruffle membrane. In terms of biological role, antagonist of fibroblast growth factor (FGF) pathways via inhibition of FGF-mediated phosphorylation of ERK1/2. Thereby acts as an antagonist of FGF-induced retinal lens fiber differentiation, may inhibit limb bud outgrowth and may negatively modulate respiratory organogenesis. Inhibits TGFB-induced epithelial-to-mesenchymal transition in retinal lens epithelial cells. Inhibits CBL/C-CBL-mediated EGFR ubiquitination. In Bos taurus (Bovine), this protein is Protein sprouty homolog 2 (SPRY2).